A 2009-amino-acid polypeptide reads, in one-letter code: ADP-ribosylation factor guanine nucleotide-exchange factor SEC7 (2009 aa).

The tract at residues 1-220 is disordered; the sequence is MSEQNSVVNA…ISLSSNGSNT (220 aa). A compositionally biased stretch (polar residues) spans 17-33; that stretch reads ISSNVETASSVNPSVKP. The segment covering 37–53 has biased composition (basic and acidic residues); that stretch reads IKEEAKETNGEDQKCKG. Over residues 91–118 the composition is skewed to acidic residues; sequence EGEDGDEDEDEDEDEDEDNGDEDDEDVD. Over residues 134-143 the composition is skewed to low complexity; it reads SVSGESTESS. The span at 144–154 shows a compositional bias: acidic residues; that stretch reads SGEDEESDESD. A compositionally biased stretch (low complexity) spans 155 to 165; it reads GNTSNSSSGDE. Residues 166–184 are compositionally biased toward acidic residues; it reads SGSEEEEEEEEEEEEEENA. Over residues 194 to 209 the composition is skewed to polar residues; it reads SVPTNDSTAPRSTHTR. A compositionally biased stretch (low complexity) spans 210–220; that stretch reads NISLSSNGSNT. 2 positions are modified to phosphoserine: Ser-212 and Ser-215. Position 334 is a phosphothreonine (Thr-334). 3 positions are modified to phosphoserine: Ser-447, Ser-452, and Ser-455. An HUS box motif is present at residues 653 to 657; it reads NYDCN. Residues 771-788 are compositionally biased toward low complexity; sequence SSARQESRSSLSNDVRSS. The disordered stretch occupies residues 771–814; it reads SSARQESRSSLSNDVRSSIMTSNDDFKPTYEDEESRSLSSQNID. Lys-797 is covalently cross-linked (Glycyl lysine isopeptide (Lys-Gly) (interchain with G-Cter in ubiquitin)). Phosphoserine is present on Ser-807. An SEC7 domain is found at 824–1010; sequence LKLRKTALSE…LFNEIANNEI (187 aa). Residue Asp-940 coordinates Mg(2+). The HDS1 domain stretch occupies residues 1017–1220; that stretch reads HQAMLSGDTN…QARVANPRVS (204 aa). Ser-1226 is subject to Phosphoserine. The residue at position 1240 (Thr-1240) is a Phosphothreonine. Polar residues predominate over residues 1708–1723; that stretch reads GRKSSVSHHQTTNDTS. The disordered stretch occupies residues 1708–1803; it reads GRKSSVSHHQ…KKTKHMKRNE (96 aa). Positions 1724-1751 are enriched in basic and acidic residues; sequence QHSDDDSNDRRENDSNISETVERAHQEE. Phosphoserine occurs at positions 1741 and 1752. Positions 1764–1777 are enriched in polar residues; sequence LNGQTKLNNGNSVP. Residues 1836–1883 form a C2 domain-interacting region (CIR) region; that stretch reads FENEDFAHCIPYKEAIRITRLLEKSYEFSRDFNEDYGLRTRLVEARVV.

In terms of assembly, interacts with ARF1. Interacts (via C-terminus) with RSP5 ubiquitin ligase.

The protein resides in the cytoplasm. It is found in the golgi apparatus. Its subcellular location is the trans-Golgi network. The protein localises to the cytoplasmic vesicle. It localises to the COPI-coated vesicle membrane. The protein resides in the COPII-coated vesicle membrane. Guanine exchange factor that acts as an activator of ARF1 at the trans-Golgi network and is thus involved in vesicular budding and traffic between compartments of the Golgi apparatus. Activation of Arf (ADP-ribosylation factor) GTPases is essential for vesicle formation via recruitment of cargo adapters and coat proteins necessary for Golgi trafficking. Also plays an essential role in ER-to-Golgi traffic. SEC7 also acts as an effector of two Rab GTPases, YPT1 and YPT31/32. The protein is ADP-ribosylation factor guanine nucleotide-exchange factor SEC7 of Saccharomyces cerevisiae (strain ATCC 204508 / S288c) (Baker's yeast).